Reading from the N-terminus, the 198-residue chain is Putative pseudouridine methyltransferase (198 aa).

Residues M132 and C186 each coordinate S-adenosyl-L-methionine.

This sequence belongs to the methyltransferase superfamily. TrmY family.

Its subcellular location is the cytoplasm. The protein is Putative pseudouridine methyltransferase of Shewanella baltica (strain OS223).